Reading from the N-terminus, the 528-residue chain is Keratin, type II cytoskeletal 78 (528 aa).

Residues 1 to 104 (MSLSPCRARR…DPQFQVVRTQ (104 aa)) are head. Residues 23-45 (VGRGRTGFSSRSLSSFGGCRGGS) are disordered. Low complexity predominate over residues 24 to 39 (GRGRTGFSSRSLSSFG). The coil 1A stretch occupies residues 105–140 (ETQQIRVLNNQFASFIDKVRFLEQQNKVLETKWHLL). The region spanning 105–418 (ETQQIRVLNN…RLLEGEECRM (314 aa)) is the IF rod domain. Residues 141–159 (QQQGLSDRPQGLESFFEAY) form a linker 1 region. Positions 160–252 (LVRLRTQLEE…LYEEELGQLQ (93 aa)) are coil 1B. Residues 253–275 (TQASDMSVVLSMDNNRCLDFRDL) form a linker 12 region. The tract at residues 276–415 (IAEVRARYEE…TYRRLLEGEE (140 aa)) is coil 2. The interval 416-528 (CRMSGECASQ…ESSLKTSVTY (113 aa)) is tail.

This sequence belongs to the intermediate filament family. Heterotetramer of two type I and two type II keratins.

This chain is Keratin, type II cytoskeletal 78 (KRT78), found in Bos taurus (Bovine).